We begin with the raw amino-acid sequence, 158 residues long: Antitoxin TacA (158 aa).

This sequence belongs to the TacA antitoxin family. As to quaternary structure, forms a complex with cognate toxin TacT.

Antitoxin component of a type II toxin-antitoxin (TA) system. Counteracts the toxic effect of cognate toxin TacT. Functionally, tacA-TacT both represses and derepresses expression of its own operon. This Mycobacterium tuberculosis (strain ATCC 25618 / H37Rv) protein is Antitoxin TacA.